Consider the following 218-residue polypeptide: Eukaryotic translation initiation factor 3 subunit K (218 aa).

One can recognise a PCI domain in the interval 42–204 (YDLEANLAVL…NIKPKNIVEK (163 aa)).

This sequence belongs to the eIF-3 subunit K family. As to quaternary structure, component of the eukaryotic translation initiation factor 3 (eIF-3) complex, which is composed of 13 subunits: eif3a, eif3b, eif3c, eif3d, eif3e, eif3f, eif3g, eif3h, eif3i, eif3j, eif3k, eif3l and eif3m.

It localises to the nucleus. It is found in the cytoplasm. In terms of biological role, component of the eukaryotic translation initiation factor 3 (eIF-3) complex, which is involved in protein synthesis of a specialized repertoire of mRNAs and, together with other initiation factors, stimulates binding of mRNA and methionyl-tRNAi to the 40S ribosome. The eIF-3 complex specifically targets and initiates translation of a subset of mRNAs involved in cell proliferation. The chain is Eukaryotic translation initiation factor 3 subunit K (eif3k) from Xenopus tropicalis (Western clawed frog).